A 783-amino-acid chain; its full sequence is uncharacterized protein (783 aa).

Positions 40-66 form a DNA-binding region, zn(2)-C6 fungal-type; that stretch reads CFNCKARKVRCDGANPCKACASNNLEC.

Its subcellular location is the cytoplasm. It localises to the nucleus. This is an uncharacterized protein from Schizosaccharomyces pombe (strain 972 / ATCC 24843) (Fission yeast).